Consider the following 42-residue polypeptide: Potassium channel toxin gamma-KTx 1.6 (42 aa).

Disulfide bonds link cysteine 5-cysteine 23, cysteine 11-cysteine 34, cysteine 20-cysteine 39, and cysteine 24-cysteine 41.

The protein belongs to the ergtoxin family. Gamma-KTx 1 subfamily. As to expression, expressed by the venom gland.

It is found in the secreted. Its function is as follows. Blocks Kv11/ERG potassium channels. The protein is Potassium channel toxin gamma-KTx 1.6 of Centruroides exilicauda (Bark scorpion).